The following is a 232-amino-acid chain: Ion-translocating oxidoreductase complex subunit E (232 aa).

The next 5 helical transmembrane spans lie at 39-59 (LGLGIATMLVLIGSNVLISLV), 69-89 (IPVFVMIIAALVTAVQLLVNA), 93-113 (GLYMSLGIFLPLIVTNCIIIG), 128-148 (AFDGLMMGLGFTLVLVLLGAT), and 182-202 (SFLLAMLPPGAFIVMGLLIAL).

The protein belongs to the NqrDE/RnfAE family. The complex is composed of six subunits: RnfA, RnfB, RnfC, RnfD, RnfE and RnfG.

Its subcellular location is the cell inner membrane. Its function is as follows. Part of a membrane-bound complex that couples electron transfer with translocation of ions across the membrane. The sequence is that of Ion-translocating oxidoreductase complex subunit E from Shewanella oneidensis (strain ATCC 700550 / JCM 31522 / CIP 106686 / LMG 19005 / NCIMB 14063 / MR-1).